The primary structure comprises 737 residues: Catalase-peroxidase (737 aa).

Residues 1 to 23 (MLKKILPVLITLAIVHNTPTAWA) form the signal peptide. Residues 102-223 (WHGAGTYRIY…LAATQMGLIY (122 aa)) constitute a cross-link (tryptophyl-tyrosyl-methioninium (Trp-Tyr) (with M-249)). His103 acts as the Proton acceptor in catalysis. A cross-link (tryptophyl-tyrosyl-methioninium (Tyr-Met) (with W-102)) is located at residues 223-249 (YVNPEGPNGKPDPVAAAKDIREAFARM). His264 is a heme b binding site.

The protein belongs to the peroxidase family. Peroxidase/catalase subfamily. In terms of assembly, homodimer or homotetramer. It depends on heme b as a cofactor. Post-translationally, formation of the three residue Trp-Tyr-Met cross-link is important for the catalase, but not the peroxidase activity of the enzyme.

It catalyses the reaction H2O2 + AH2 = A + 2 H2O. The catalysed reaction is 2 H2O2 = O2 + 2 H2O. Bifunctional enzyme with both catalase and broad-spectrum peroxidase activity. This Yersinia pseudotuberculosis serotype I (strain IP32953) protein is Catalase-peroxidase.